We begin with the raw amino-acid sequence, 543 residues long: MMPTPVILLKEGTDSSQGIPQLVSNISACQVIAEAVRTTLGPRGMDKLIVDGRGKATISNDGATILKLLDVVHPAAKTLVDIAKSQDAEVGDGTTSVTLLAAEFLKQVKPYVEEGLHPQIIIRAFRTATQLAVNKIKEIAVTVKKEDKVEQRKLLEKCAMTALSSKLISQQKAFFAKMVVDAVMMLDDLLQLKMIGIKKVQGGALEESQLVAGVAFKKTFSYAGFEMQPKKYHNPMIALLNVELELKAEKDNAEIRVHTVEDYQAIVDAEWNILYDKLEKIHHSGAKVVLSKLPIGDVATQYFADRDMFCAGRVPEEDLKRTMMACGGSIQTSVNALSSDVLGRCQVFEETQIGGERYNFFTGCPKAKTCTIILRGGAEQFMEETERSLHDAIMIVRRAIKNDSVVAGGGAIEMELSKYLRDYSRTIPGKQQLLIGAYAKALEIIPRQLCDNAGFDATNILNKLRARHAQGGMWYGVDINTEDIADNFEAFVWEPAMVRINALTAASEAACLIVSVDETIKNPRSTVDASPAAGRGRGRGRLH.

Met-1 is subject to N-acetylmethionine. Gly-41 is a binding site for ADP. Residue Gly-41 participates in ATP binding. Lys-67 bears the N6-acetyllysine mark. Asp-92 serves as a coordination point for Mg(2+). ADP contacts are provided by Gly-93, Thr-94, Thr-95, Ser-96, Ser-164, and Ser-165. ATP is bound at residue Gly-93. Ser-96 serves as a coordination point for ATP. An N6-acetyllysine mark is found at Lys-250 and Lys-320. ATP is bound by residues Arg-398 and Gly-409. Gly-409 lines the ADP pocket. Lys-430 is covalently cross-linked (Glycyl lysine isopeptide (Lys-Gly) (interchain with G-Cter in SUMO2)). Positions 494 and 499 each coordinate ADP. Arg-499 contacts ATP. Residues 524 to 543 (RSTVDASPAAGRGRGRGRLH) form a disordered region. Arg-535 bears the Omega-N-methylarginine mark.

Belongs to the TCP-1 chaperonin family. As to quaternary structure, component of the chaperonin-containing T-complex (TRiC), a hexadecamer composed of two identical back-to-back stacked rings enclosing a protein folding chamber. Each ring is made up of eight different subunits: TCP1/CCT1, CCT2, CCT3, CCT4, CCT5, CCT6A/CCT6, CCT7, CCT8. Interacts with PACRG. Interacts with DLEC1.

The protein resides in the cytoplasm. The catalysed reaction is ATP + H2O = ADP + phosphate + H(+). Its function is as follows. Component of the chaperonin-containing T-complex (TRiC), a molecular chaperone complex that assists the folding of actin, tubulin and other proteins upon ATP hydrolysis. The TRiC complex mediates the folding of WRAP53/TCAB1, thereby regulating telomere maintenance. This is T-complex protein 1 subunit eta (CCT7) from Bos taurus (Bovine).